Consider the following 314-residue polypeptide: Glycerol-3-phosphate dehydrogenase [NAD(P)+] (314 aa).

Positions 14, 15, 35, and 108 each coordinate NADPH. Sn-glycerol 3-phosphate is bound by residues lysine 108 and glycine 136. Residue alanine 140 participates in NADPH binding. Positions 191, 247, 257, 258, and 259 each coordinate sn-glycerol 3-phosphate. Lysine 191 acts as the Proton acceptor in catalysis. Position 258 (arginine 258) interacts with NADPH. Leucine 282 and glutamate 284 together coordinate NADPH.

Belongs to the NAD-dependent glycerol-3-phosphate dehydrogenase family.

It localises to the cytoplasm. It carries out the reaction sn-glycerol 3-phosphate + NAD(+) = dihydroxyacetone phosphate + NADH + H(+). The catalysed reaction is sn-glycerol 3-phosphate + NADP(+) = dihydroxyacetone phosphate + NADPH + H(+). Its pathway is membrane lipid metabolism; glycerophospholipid metabolism. Its function is as follows. Catalyzes the reduction of the glycolytic intermediate dihydroxyacetone phosphate (DHAP) to sn-glycerol 3-phosphate (G3P), the key precursor for phospholipid synthesis. This Rickettsia bellii (strain OSU 85-389) protein is Glycerol-3-phosphate dehydrogenase [NAD(P)+].